Consider the following 367-residue polypeptide: UDP-N-acetylglucosamine--N-acetylmuramyl-(pentapeptide) pyrophosphoryl-undecaprenol N-acetylglucosamine transferase (367 aa).

Residues 15 to 17 (TGG), Asn127, Arg163, Ser191, Ile249, and Gln294 each bind UDP-N-acetyl-alpha-D-glucosamine.

This sequence belongs to the glycosyltransferase 28 family. MurG subfamily.

It is found in the cell inner membrane. It carries out the reaction di-trans,octa-cis-undecaprenyl diphospho-N-acetyl-alpha-D-muramoyl-L-alanyl-D-glutamyl-meso-2,6-diaminopimeloyl-D-alanyl-D-alanine + UDP-N-acetyl-alpha-D-glucosamine = di-trans,octa-cis-undecaprenyl diphospho-[N-acetyl-alpha-D-glucosaminyl-(1-&gt;4)]-N-acetyl-alpha-D-muramoyl-L-alanyl-D-glutamyl-meso-2,6-diaminopimeloyl-D-alanyl-D-alanine + UDP + H(+). Its pathway is cell wall biogenesis; peptidoglycan biosynthesis. In terms of biological role, cell wall formation. Catalyzes the transfer of a GlcNAc subunit on undecaprenyl-pyrophosphoryl-MurNAc-pentapeptide (lipid intermediate I) to form undecaprenyl-pyrophosphoryl-MurNAc-(pentapeptide)GlcNAc (lipid intermediate II). This Burkholderia mallei (strain NCTC 10247) protein is UDP-N-acetylglucosamine--N-acetylmuramyl-(pentapeptide) pyrophosphoryl-undecaprenol N-acetylglucosamine transferase.